The sequence spans 220 residues: Thiamine-phosphate synthase (220 aa).

4-amino-2-methyl-5-(diphosphooxymethyl)pyrimidine is bound by residues 46 to 50 (QFREK) and N83. Mg(2+) is bound by residues D84 and D103. Residue S122 coordinates 4-amino-2-methyl-5-(diphosphooxymethyl)pyrimidine. Residue 149-151 (TNS) participates in 2-[(2R,5Z)-2-carboxy-4-methylthiazol-5(2H)-ylidene]ethyl phosphate binding. Residue K152 participates in 4-amino-2-methyl-5-(diphosphooxymethyl)pyrimidine binding. Residues G181 and 201 to 202 (IS) contribute to the 2-[(2R,5Z)-2-carboxy-4-methylthiazol-5(2H)-ylidene]ethyl phosphate site.

It belongs to the thiamine-phosphate synthase family. Mg(2+) is required as a cofactor.

It catalyses the reaction 2-[(2R,5Z)-2-carboxy-4-methylthiazol-5(2H)-ylidene]ethyl phosphate + 4-amino-2-methyl-5-(diphosphooxymethyl)pyrimidine + 2 H(+) = thiamine phosphate + CO2 + diphosphate. The enzyme catalyses 2-(2-carboxy-4-methylthiazol-5-yl)ethyl phosphate + 4-amino-2-methyl-5-(diphosphooxymethyl)pyrimidine + 2 H(+) = thiamine phosphate + CO2 + diphosphate. It carries out the reaction 4-methyl-5-(2-phosphooxyethyl)-thiazole + 4-amino-2-methyl-5-(diphosphooxymethyl)pyrimidine + H(+) = thiamine phosphate + diphosphate. Its pathway is cofactor biosynthesis; thiamine diphosphate biosynthesis; thiamine phosphate from 4-amino-2-methyl-5-diphosphomethylpyrimidine and 4-methyl-5-(2-phosphoethyl)-thiazole: step 1/1. In terms of biological role, condenses 4-methyl-5-(beta-hydroxyethyl)thiazole monophosphate (THZ-P) and 2-methyl-4-amino-5-hydroxymethyl pyrimidine pyrophosphate (HMP-PP) to form thiamine monophosphate (TMP). The chain is Thiamine-phosphate synthase from Mannheimia succiniciproducens (strain KCTC 0769BP / MBEL55E).